A 705-amino-acid chain; its full sequence is Tryptophan synthase (705 aa).

Residues 1–293 (MEAIKKVFEQ…QLTPNAETAK (293 aa)) are tryptophan synthase alpha chain. Catalysis depends on proton acceptor residues Glu-49 and Asp-60. The segment at 266–287 (KGEPSRVRSPGAAQRTPSQLTP) is disordered. The interval 294–705 (GVENILPARF…HVSSNAIPSK (412 aa)) is tryptophan synthase beta chain. The residue at position 381 (Lys-381) is an N6-(pyridoxal phosphate)lysine.

It in the N-terminal section; belongs to the TrpA family. This sequence in the C-terminal section; belongs to the TrpB family. Pyridoxal 5'-phosphate serves as cofactor.

It carries out the reaction (1S,2R)-1-C-(indol-3-yl)glycerol 3-phosphate + L-serine = D-glyceraldehyde 3-phosphate + L-tryptophan + H2O. Its pathway is amino-acid biosynthesis; L-tryptophan biosynthesis; L-tryptophan from chorismate: step 5/5. This chain is Tryptophan synthase (TRP-1), found in Coprinopsis cinerea (Inky cap fungus).